The following is a 302-amino-acid chain: Quinolinate synthase (302 aa).

Iminosuccinate contacts are provided by histidine 24 and serine 41. Position 86 (cysteine 86) interacts with [4Fe-4S] cluster. Iminosuccinate-binding positions include 112 to 114 (YVN) and serine 129. Cysteine 171 provides a ligand contact to [4Fe-4S] cluster. Residues 197-199 (HPE) and threonine 214 contribute to the iminosuccinate site. Cysteine 259 contributes to the [4Fe-4S] cluster binding site.

This sequence belongs to the quinolinate synthase family. Type 2 subfamily. [4Fe-4S] cluster is required as a cofactor.

The protein resides in the cytoplasm. The catalysed reaction is iminosuccinate + dihydroxyacetone phosphate = quinolinate + phosphate + 2 H2O + H(+). It participates in cofactor biosynthesis; NAD(+) biosynthesis; quinolinate from iminoaspartate: step 1/1. Functionally, catalyzes the condensation of iminoaspartate with dihydroxyacetone phosphate to form quinolinate. This Dehalococcoides mccartyi (strain ATCC BAA-2266 / KCTC 15142 / 195) (Dehalococcoides ethenogenes (strain 195)) protein is Quinolinate synthase.